A 372-amino-acid chain; its full sequence is Queuine tRNA-ribosyltransferase (372 aa).

The active-site Proton acceptor is the aspartate 92. Residues aspartate 92–tyrosine 96, aspartate 146, glutamine 188, and glycine 215 contribute to the substrate site. An RNA binding region spans residues glycine 246–glutamate 252. Catalysis depends on aspartate 265, which acts as the Nucleophile. Residues threonine 270–arginine 274 form an RNA binding; important for wobble base 34 recognition region. Cysteine 303, cysteine 305, cysteine 308, and histidine 334 together coordinate Zn(2+).

It belongs to the queuine tRNA-ribosyltransferase family. As to quaternary structure, homodimer. Within each dimer, one monomer is responsible for RNA recognition and catalysis, while the other monomer binds to the replacement base PreQ1. Zn(2+) is required as a cofactor.

The catalysed reaction is 7-aminomethyl-7-carbaguanine + guanosine(34) in tRNA = 7-aminomethyl-7-carbaguanosine(34) in tRNA + guanine. Its pathway is tRNA modification; tRNA-queuosine biosynthesis. Catalyzes the base-exchange of a guanine (G) residue with the queuine precursor 7-aminomethyl-7-deazaguanine (PreQ1) at position 34 (anticodon wobble position) in tRNAs with GU(N) anticodons (tRNA-Asp, -Asn, -His and -Tyr). Catalysis occurs through a double-displacement mechanism. The nucleophile active site attacks the C1' of nucleotide 34 to detach the guanine base from the RNA, forming a covalent enzyme-RNA intermediate. The proton acceptor active site deprotonates the incoming PreQ1, allowing a nucleophilic attack on the C1' of the ribose to form the product. After dissociation, two additional enzymatic reactions on the tRNA convert PreQ1 to queuine (Q), resulting in the hypermodified nucleoside queuosine (7-(((4,5-cis-dihydroxy-2-cyclopenten-1-yl)amino)methyl)-7-deazaguanosine). This chain is Queuine tRNA-ribosyltransferase, found in Prochlorococcus marinus (strain MIT 9215).